The following is a 215-amino-acid chain: Cytochrome b6 (215 aa).

A helical transmembrane segment spans residues 32-52 (IFYCLGGITFTCFLLQVASGF). Cys35 provides a ligand contact to heme c. Heme b contacts are provided by His86 and His100. 3 consecutive transmembrane segments (helical) span residues 90–110 (ASMM…TGGF), 116–136 (LTWV…VTGY), and 186–206 (LHTF…FLMI). His187 and His202 together coordinate heme b.

The protein belongs to the cytochrome b family. PetB subfamily. In terms of assembly, the 4 large subunits of the cytochrome b6-f complex are cytochrome b6, subunit IV (17 kDa polypeptide, PetD), cytochrome f and the Rieske protein, while the 4 small subunits are PetG, PetL, PetM and PetN. The complex functions as a dimer. Requires heme b as cofactor. The cofactor is heme c.

It localises to the plastid. The protein resides in the chloroplast thylakoid membrane. Component of the cytochrome b6-f complex, which mediates electron transfer between photosystem II (PSII) and photosystem I (PSI), cyclic electron flow around PSI, and state transitions. This is Cytochrome b6 from Coleochaete orbicularis (Charophycean green alga).